The sequence spans 340 residues: Serine/threonine-protein kinase PDIK1L (340 aa).

Residues 8 to 333 (YDLIREVGRG…LELRLVQIAF (326 aa)) form the Protein kinase domain. Residues 14–22 (VGRGSYGVV) and K37 each bind ATP. D164 functions as the Proton acceptor in the catalytic mechanism.

This sequence belongs to the protein kinase superfamily. Ser/Thr protein kinase family.

It is found in the nucleus. The catalysed reaction is L-seryl-[protein] + ATP = O-phospho-L-seryl-[protein] + ADP + H(+). It catalyses the reaction L-threonyl-[protein] + ATP = O-phospho-L-threonyl-[protein] + ADP + H(+). This is Serine/threonine-protein kinase PDIK1L (PDIK1L) from Pongo abelii (Sumatran orangutan).